Here is a 665-residue protein sequence, read N- to C-terminus: F-box/LRR-repeat protein 3 (665 aa).

An F-box domain is found at 11–60; that stretch reads KPFDLLSEELVFIILDLISPNPSDLKSFSLTCKSFYQLESKHRGSLKPLR. 21 LRR repeats span residues 61–81, 82–108, 109–134, 135–159, 160–185, 186–211, 214–235, 236–261, 262–287, 288–312, 313–338, 339–364, 365–390, 391–416, 419–440, 441–466, 467–492, 493–517, 518–543, 544–569, and 594–619; these read SDYLPRILTRYRNTTDLDLTF, CPRVTDYALSVVGCLSGPTLRSLDLSR, SGSFSAAGLLRLALKCVNLVEIDLSN, ATEMRDADAAVVAEARSLERLKLGR, CKMLTDMGIGCIAVGCKKLNTVSLKW, CVGVGDLGVGLLAVKCKDIRTLDLSY, ITGKCLHDILKLQHLEELLLEG, CFGVDDDSLKSLRHDCKSLKKLDASS, CQNLTHRGLTSLLSGAGYLQRLDLSH, CSSVISLDFASSLKKVSALQSIRLD, GCSVTPDGLKAIGTLCNSLKEVSLSK, CVSVTDEGLSSLVMKLKDLRKLDITC, CRKLSRVSITQIANSCPLLVSLKMES, CSLVSREAFWLIGQKCRLLEELDLTD, IDDEGLKSISSCLSLSSLKLGI, CLNITDKGLSYIGMGCSNLRELDLYR, SVGITDVGISTIAQGCIHLETINISY, CQDITDKSLVSLSKCSLLQTFESRG, CPNITSQGLAAIAVRCKRLAKVDLKK, CPSINDAGLLALAHFSQNLKQINVSD, and SSGLRPSGVAAALLGCGGLRKAKLHA.

The protein is F-box/LRR-repeat protein 3 (FBL3) of Arabidopsis thaliana (Mouse-ear cress).